A 628-amino-acid chain; its full sequence is Chaperone protein HtpG (628 aa).

Residues 1-334 form an a; substrate-binding region; it reads MTTTDTASET…SEDLPLNLSR (334 aa). The b stretch occupies residues 335-550; sequence EMLQNNPQLA…GFGPDRELEK (216 aa). The tract at residues 551-628 is c; sequence MLARANKGAA…LVLRGLVAHG (78 aa).

This sequence belongs to the heat shock protein 90 family. In terms of assembly, homodimer.

It is found in the cytoplasm. In terms of biological role, molecular chaperone. Has ATPase activity. This Rhodopseudomonas palustris (strain BisB5) protein is Chaperone protein HtpG.